An 84-amino-acid chain; its full sequence is UPF0457 protein BC_3525 (84 aa).

It belongs to the UPF0457 family.

The sequence is that of UPF0457 protein BC_3525 from Bacillus cereus (strain ATCC 14579 / DSM 31 / CCUG 7414 / JCM 2152 / NBRC 15305 / NCIMB 9373 / NCTC 2599 / NRRL B-3711).